Reading from the N-terminus, the 400-residue chain is Na(+)/H(+) antiporter NhaA (400 aa).

11 helical membrane passes run 10-30, 60-80, 95-115, 126-146, 155-175, 178-198, 218-238, 265-285, 295-315, 334-354, and 364-384; these read FNLE…AMII, AHHW…GLEL, IILP…VYLF, GWAI…SLLG, VFLV…IALF, NDLS…LYML, IAVL…ALFI, GILP…AGFG, IAAG…WLIF, AALL…LAFA, and LGII…LKTT.

Belongs to the NhaA Na(+)/H(+) (TC 2.A.33) antiporter family.

The protein resides in the cell inner membrane. The catalysed reaction is Na(+)(in) + 2 H(+)(out) = Na(+)(out) + 2 H(+)(in). In terms of biological role, na(+)/H(+) antiporter that extrudes sodium in exchange for external protons. The chain is Na(+)/H(+) antiporter NhaA from Psychrobacter arcticus (strain DSM 17307 / VKM B-2377 / 273-4).